A 433-amino-acid polypeptide reads, in one-letter code: MMICLVFLCVLTLARGEIYPPICPAPGVGNDEAVRAGELLLEISAYRNQRSGRVELWGSAAVNNQVFYGGMENSQIDYDFGKFLVFRCFQVFNNVHKLLFNTVSSATMHLARKRVQKCGHGKMTFISIQVQCSVNKKSIRLSRMSEASLKKQVLRVAFFLDRNNNSWIADKNFQGEDRTMLRLWNELSTYQQYLISSCNNDVKILSELYGEFRQIALPYDEKLNLNFMPVIRSSSERLFRADDLKCSFSRWLGAEGEFAVCEYSGWGVSRLGKIEIFAEKPLTFDMAWKTVKMRSSGAYTSLFRDDVTWGLIPLDKWVGDKYFCMCTNKESGDNVIVTLPEKNVEKSIQIYDEGSAMLSFAEMTSIILNLMFMGAVAVSVGILGISCFVGLKEIIYFIFVSVDYMWPFCDTLLTTAVNCFFKGRTFLRRELKI.

Residues 1–364 (MMICLVFLCV…SAMLSFAEMT (364 aa)) lie on the Lumenal side of the membrane. N-linked (GlcNAc...) asparagine; by host glycosylation occurs at N164. Residues 365-385 (SIILNLMFMGAVAVSVGILGI) traverse the membrane as a helical segment. At 386–433 (SCFVGLKEIIYFIFVSVDYMWPFCDTLLTTAVNCFFKGRTFLRRELKI) the chain is on the cytoplasmic side.

Belongs to the herpesviruses U21 family.

The protein resides in the host endoplasmic reticulum membrane. It is found in the host lysosome membrane. Its function is as follows. Plays a role in escape from immune detection by associating with and diverting properly folded class I MHC molecules to an endolysosomal compartment, effectively removing them from the cell surface. In consequence, surface class I molecules are down-regulated and infected cells are masked for immune recognition by cytotoxic T lymphocytes. Also plays a role in the down-regulation of the host stress-induced NKG2D ligand UBPL3, which enables immune cells expressing the NKG2D receptor to recognize and annihilate infected cells prior to viral spread. This chain is Glycoprotein U21 (U21), found in Homo sapiens (Human).